A 145-amino-acid polypeptide reads, in one-letter code: Nickel-responsive regulator (145 aa).

Ni(2+) is bound by residues His-77, His-88, His-90, and Cys-96.

This sequence belongs to the transcriptional regulatory CopG/NikR family. Homotetramer. Requires Ni(2+) as cofactor.

Its function is as follows. Transcriptional repressor of the nikABCDE operon. Is active in the presence of excessive concentrations of intracellular nickel. The sequence is that of Nickel-responsive regulator from Edwardsiella ictaluri (strain 93-146).